Here is a 126-residue protein sequence, read N- to C-terminus: Hydrogenase maturation factor HypA (126 aa).

His2 lines the Ni(2+) pocket. The Zn(2+) site is built by Cys78, Cys81, Cys97, and Cys100.

This sequence belongs to the HypA/HybF family.

Involved in the maturation of [NiFe] hydrogenases. Required for nickel insertion into the metal center of the hydrogenase. The polypeptide is Hydrogenase maturation factor HypA (Methanococcus maripaludis (strain C5 / ATCC BAA-1333)).